The chain runs to 434 residues: Glutamate-1-semialdehyde 2,1-aminomutase 1 (434 aa).

An N6-(pyridoxal phosphate)lysine modification is found at lysine 270.

The protein belongs to the class-III pyridoxal-phosphate-dependent aminotransferase family. HemL subfamily. Homodimer. Pyridoxal 5'-phosphate serves as cofactor.

It localises to the cytoplasm. The enzyme catalyses (S)-4-amino-5-oxopentanoate = 5-aminolevulinate. It functions in the pathway porphyrin-containing compound metabolism; protoporphyrin-IX biosynthesis; 5-aminolevulinate from L-glutamyl-tRNA(Glu): step 2/2. This is Glutamate-1-semialdehyde 2,1-aminomutase 1 from Bacillus cereus (strain AH187).